The primary structure comprises 383 residues: Guanine nucleotide-binding protein G(s) subunit alpha (383 aa).

Residues 1–31 (MGCFGSAGSKQSDSNSSEDTKSQKRRSDAIT) form a disordered region. Glycine 2 carries N-palmitoyl glycine lipidation. Residue cysteine 3 is the site of S-palmitoyl cysteine attachment. Residues 8-17 (GSKQSDSNSS) show a composition bias toward polar residues. Basic and acidic residues predominate over residues 18–31 (EDTKSQKRRSDAIT). One can recognise a G-alpha domain in the interval 43 to 383 (ATHRLLLLGA…RMHLRQYELL (341 aa)). Positions 46-59 (RLLLLGAGESGKST) are G1 motif. GTP is bound by residues 51 to 58 (GAGESGKS), 187 to 193 (LRCRVLT), 212 to 216 (DVGGQ), 281 to 284 (NKQD), and alanine 355. Residues serine 58 and threonine 193 each coordinate Mg(2+). The G2 motif stretch occupies residues 185 to 193 (DILRCRVLT). The segment at 208–217 (FHMFDVGGQR) is G3 motif. The G4 motif stretch occupies residues 277-284 (ILFLNKQD). Residues 353 to 358 (TCAVDT) form a G5 motif region.

Belongs to the G-alpha family. G(s) subfamily. As to quaternary structure, g proteins are composed of 3 units; alpha, beta and gamma. The alpha chain contains the guanine nucleotide binding site.

Its function is as follows. Guanine nucleotide-binding proteins (G proteins) are involved as modulators or transducers in various transmembrane signaling systems. The G(s) protein is involved in hormonal regulation of adenylate cyclase: it activates the cyclase. Participates in olfactory signal transduction. In Anopheles gambiae (African malaria mosquito), this protein is Guanine nucleotide-binding protein G(s) subunit alpha.